The chain runs to 309 residues: Type II methyltransferase M.HgiDI (309 aa).

Residues 1 to 297 (MKTIDLFAGC…TSLQAYLNQP (297 aa)) form the SAM-dependent MTase C5-type domain. Residue Cys75 is part of the active site.

The protein belongs to the class I-like SAM-binding methyltransferase superfamily. C5-methyltransferase family.

The enzyme catalyses a 2'-deoxycytidine in DNA + S-adenosyl-L-methionine = a 5-methyl-2'-deoxycytidine in DNA + S-adenosyl-L-homocysteine + H(+). In terms of biological role, a methylase that recognizes the double-stranded sequence 5'-GRCGYC-3', methylates C-? on both strands, and protects the DNA from cleavage by the HgiDI endonuclease. In Herpetosiphon aurantiacus (Herpetosiphon giganteus), this protein is Type II methyltransferase M.HgiDI.